A 118-amino-acid chain; its full sequence is Large ribosomal subunit protein uL22 (118 aa).

This sequence belongs to the universal ribosomal protein uL22 family. As to quaternary structure, part of the 50S ribosomal subunit.

In terms of biological role, this protein binds specifically to 23S rRNA; its binding is stimulated by other ribosomal proteins, e.g. L4, L17, and L20. It is important during the early stages of 50S assembly. It makes multiple contacts with different domains of the 23S rRNA in the assembled 50S subunit and ribosome. The globular domain of the protein is located near the polypeptide exit tunnel on the outside of the subunit, while an extended beta-hairpin is found that lines the wall of the exit tunnel in the center of the 70S ribosome. This chain is Large ribosomal subunit protein uL22, found in Pediococcus pentosaceus (strain ATCC 25745 / CCUG 21536 / LMG 10740 / 183-1w).